A 956-amino-acid polypeptide reads, in one-letter code: DNA replication helicase (956 aa).

120–127 (GTAGAGKT) provides a ligand contact to ATP. Residues 658-694 (PINNHVDADSSQGGQSVPVSQRMEHGQEETHDIPCLS) form a disordered region. Residues 667-678 (SSQGGQSVPVSQ) are compositionally biased toward low complexity. The segment covering 679-694 (RMEHGQEETHDIPCLS) has biased composition (basic and acidic residues).

It belongs to the herpesviridae helicase family. Associates with the primase and the primase-associated factor to form the helicase-primase complex.

The protein localises to the host nucleus. In terms of biological role, component of the helicase/primase complex. Unwinds the DNA at the replication forks and generates single-stranded DNA for both leading and lagging strand synthesis. The primase synthesizes short RNA primers on the lagging strand that the polymerase elongates using dNTPs. Possesses helicase-like motifs and therefore may act as the helicase subunit of the complex. The sequence is that of DNA replication helicase from Human cytomegalovirus (strain AD169) (HHV-5).